The following is a 274-amino-acid chain: uncharacterized protein (274 aa).

104 to 111 contributes to the ATP binding site; sequence GVFAIGKS.

This is an uncharacterized protein from Mycoplasma genitalium (strain ATCC 33530 / DSM 19775 / NCTC 10195 / G37) (Mycoplasmoides genitalium).